Reading from the N-terminus, the 243-residue chain is Ubiquinone/menaquinone biosynthesis C-methyltransferase UbiE (243 aa).

S-adenosyl-L-methionine is bound by residues Thr69, Asp90, and 116–117; that span reads DA.

Belongs to the class I-like SAM-binding methyltransferase superfamily. MenG/UbiE family.

It carries out the reaction a 2-demethylmenaquinol + S-adenosyl-L-methionine = a menaquinol + S-adenosyl-L-homocysteine + H(+). The catalysed reaction is a 2-methoxy-6-(all-trans-polyprenyl)benzene-1,4-diol + S-adenosyl-L-methionine = a 5-methoxy-2-methyl-3-(all-trans-polyprenyl)benzene-1,4-diol + S-adenosyl-L-homocysteine + H(+). The protein operates within quinol/quinone metabolism; menaquinone biosynthesis; menaquinol from 1,4-dihydroxy-2-naphthoate: step 2/2. It functions in the pathway cofactor biosynthesis; ubiquinone biosynthesis. Functionally, methyltransferase required for the conversion of demethylmenaquinol (DMKH2) to menaquinol (MKH2) and the conversion of 2-polyprenyl-6-methoxy-1,4-benzoquinol (DDMQH2) to 2-polyprenyl-3-methyl-6-methoxy-1,4-benzoquinol (DMQH2). This is Ubiquinone/menaquinone biosynthesis C-methyltransferase UbiE from Paraburkholderia phytofirmans (strain DSM 17436 / LMG 22146 / PsJN) (Burkholderia phytofirmans).